The primary structure comprises 343 residues: S-adenosylmethionine:tRNA ribosyltransferase-isomerase (343 aa).

This sequence belongs to the QueA family. Monomer.

It localises to the cytoplasm. It carries out the reaction 7-aminomethyl-7-carbaguanosine(34) in tRNA + S-adenosyl-L-methionine = epoxyqueuosine(34) in tRNA + adenine + L-methionine + 2 H(+). It functions in the pathway tRNA modification; tRNA-queuosine biosynthesis. Functionally, transfers and isomerizes the ribose moiety from AdoMet to the 7-aminomethyl group of 7-deazaguanine (preQ1-tRNA) to give epoxyqueuosine (oQ-tRNA). This is S-adenosylmethionine:tRNA ribosyltransferase-isomerase from Coxiella burnetii (strain CbuG_Q212) (Coxiella burnetii (strain Q212)).